Here is an 863-residue protein sequence, read N- to C-terminus: MQRRGALFGMPGGSGGRKMAAGDIGELLVPHMPTIRVPRSGDRVYKNECAFSYDSPNSEGGLYVCMNTFLAFGREHVERHFRKTGQSVYMHLKRHVREKVRGASGGALPKRRNSKIFLDLDTDDDLNSDDYEYEDEAKLVIFPDHYEIALPNIEELPALVTIACDAVLSSKSPYRKQDPDTWENELPVSKYANNLTQLDNGVRIPPSGWKCARCDLRENLWLNLTDGSVLCGKWFFDSSGGNGHALEHYRDMGYPLAVKLGTITPDGADVYSFQEEEPVLDPHLAKHLAHFGIDMLHMHGTENGLQDNDIKLRVSEWEVIQESGTKLKPMYGPGYTGLKNLGNSCYLSSVMQAIFSIPEFQRAYVGNLPRIFDYSPLDPTQDFNTQMTKLGHGLLSGQYSKPPVKSELIEQVMKEEHKPQQNGISPRMFKAFVSKSHPEFSSNRQQDAQEFFLHLVNLVERNRIGSENPSDVFRFLVEERIQCCQTRKVRYTERVDYLMQLPVAMEAATNKDELIAYELTRREAEANRRPLPELVRAKIPFSACLQAFSEPENVDDFWSSALQAKSAGVKTSRFASFPEYLVVQIKKFTFGLDWVPKKFDVSIDMPDLLDINHLRARGLQPGEEELPDISPPIVIPDDSKDRLMNQLIDPSDIDESSVMQLAEMGFPLEACRKAVYFTGNMGAEVAFNWIIVHMEEPDFAEPLTMPGYGGAASAGASVFGASGLDNQPPEEIVAIITSMGFQRNQAIQALRATNNNLERALDWIFSHPEFEEDSDFVIEMENNANANIISEAKPEGPRVKDGSGTYELFAFISHMGTSTMSGHYICHIKKEGRWVIYNDHKVCASERPPKDLGYMYFYRRIPS.

S114 bears the Phosphoserine; by AURKB mark. T122 bears the Phosphothreonine mark. Residues 187-295 form a UBP-type; degenerate zinc finger; it reads PVSKYANNLT…KHLAHFGIDM (109 aa). Zn(2+)-binding residues include C211, C214, C231, and H244. A Glycyl lysine isopeptide (Lys-Gly) (interchain with G-Cter in SUMO2) cross-link involves residue K311. The 526-residue stretch at 336–861 folds into the USP domain; the sequence is TGLKNLGNSC…LGYMYFYRRI (526 aa). C345 acts as the Nucleophile in catalysis. K405 participates in a covalent cross-link: Glycyl lysine isopeptide (Lys-Gly) (interchain with G-Cter in SUMO2). 2 UBA domains span residues 652–693 and 727–767; these read DIDE…IIVH and QPPE…IFSH. The Proton acceptor role is filled by H823.

Belongs to the peptidase C19 family. Interacts with UFD1. Interacts (via UBA domains) with SIAH2 (when ubiquitinated). Interacts with BAG6; the interaction is direct and may mediate UBL4A deubiquitination. Interacts (via UBA 2 domain) with AMFR; the interaction is direct. Interacts with UBL4A; may be indirect via BAG6. Interacts with NEDD4. Phosphorylated by AURKB at Ser-114; leading to stabilization of cell cycle proteins such as SKP2 and AURKB, but not MCL1. Highly expressed in ovary and testes.

Its subcellular location is the cytoplasm. The catalysed reaction is Thiol-dependent hydrolysis of ester, thioester, amide, peptide and isopeptide bonds formed by the C-terminal Gly of ubiquitin (a 76-residue protein attached to proteins as an intracellular targeting signal).. With respect to regulation, specifically inhibited by spautin-1 (specific and potent autophagy inhibitor-1), a derivative of MBCQ that binds to USP13 and inhibits deubiquitinase activity. Regulated by PIK3C3/VPS34-containing complexes. The weak deubiquitinase activity in vitro suggests the existence of some mechanism that activates the enzyme. Deubiquitinase that mediates deubiquitination of target proteins such as BECN1, MITF, SKP2 and USP10 and is involved in various processes such as autophagy, endoplasmic reticulum-associated degradation (ERAD), cell cycle progression or DNA damage response. Component of a regulatory loop that controls autophagy and p53/TP53 levels: mediates deubiquitination of BECN1, a key regulator of autophagy, leading to stabilize the PIK3C3/VPS34-containing complexes. Alternatively, forms with NEDD4 a deubiquitination complex, which subsequently stabilizes VPS34 to promote autophagy. Also deubiquitinates USP10, an essential regulator of p53/TP53 stability. In turn, PIK3C3/VPS34-containing complexes regulate USP13 stability, suggesting the existence of a regulatory system by which PIK3C3/VPS34-containing complexes regulate p53/TP53 protein levels via USP10 and USP13. Recruited by nuclear UFD1 and mediates deubiquitination of SKP2, thereby regulating endoplasmic reticulum-associated degradation (ERAD). Also regulates ERAD through the deubiquitination of UBL4A a component of the BAG6/BAT3 complex. Mediates stabilization of SIAH2 independently of deubiquitinase activity: binds ubiquitinated SIAH2 and acts by impairing SIAH2 autoubiquitination. Regulates the cell cycle progression by stabilizing cell cycle proteins such as SKP2 and AURKB. In addition, plays an important role in maintaining genomic stability and in DNA replication checkpoint activation via regulation of RAP80 and TOPBP1. Deubiquitinates the multifunctional protein HMGB1 and subsequently drives its nucleocytoplasmic localization and its secretion. Positively regulates type I and type II interferon signalings by deubiquitinating STAT1 but negatively regulates antiviral response by deubiquitinating STING1. The chain is Ubiquitin carboxyl-terminal hydrolase 13 (USP13) from Homo sapiens (Human).